The primary structure comprises 366 residues: Carbamoyl phosphate synthase small chain (366 aa).

Positions 1 to 171 (MLERRYLVLE…KTPYVSTGSD (171 aa)) are CPSase. Serine 47, glycine 221, and glycine 223 together coordinate L-glutamine. Residues 173–360 (SVVLLDFGKK…MTMMKEFKEK (188 aa)) form the Glutamine amidotransferase type-1 domain. Cysteine 248 (nucleophile) is an active-site residue. L-glutamine is bound by residues leucine 249, glutamine 252, asparagine 290, glycine 292, and tyrosine 293. Catalysis depends on residues histidine 333 and glutamate 335.

It belongs to the CarA family. In terms of assembly, composed of two chains; the small (or glutamine) chain promotes the hydrolysis of glutamine to ammonia, which is used by the large (or ammonia) chain to synthesize carbamoyl phosphate. Tetramer of heterodimers (alpha,beta)4.

The enzyme catalyses hydrogencarbonate + L-glutamine + 2 ATP + H2O = carbamoyl phosphate + L-glutamate + 2 ADP + phosphate + 2 H(+). It carries out the reaction L-glutamine + H2O = L-glutamate + NH4(+). It functions in the pathway amino-acid biosynthesis; L-arginine biosynthesis; carbamoyl phosphate from bicarbonate: step 1/1. It participates in pyrimidine metabolism; UMP biosynthesis via de novo pathway; (S)-dihydroorotate from bicarbonate: step 1/3. Its function is as follows. Small subunit of the glutamine-dependent carbamoyl phosphate synthetase (CPSase). CPSase catalyzes the formation of carbamoyl phosphate from the ammonia moiety of glutamine, carbonate, and phosphate donated by ATP, constituting the first step of 2 biosynthetic pathways, one leading to arginine and/or urea and the other to pyrimidine nucleotides. The small subunit (glutamine amidotransferase) binds and cleaves glutamine to supply the large subunit with the substrate ammonia. The sequence is that of Carbamoyl phosphate synthase small chain from Staphylococcus haemolyticus (strain JCSC1435).